We begin with the raw amino-acid sequence, 94 residues long: Serine protease inhibitor Kazal-type 13 (94 aa).

Residues 1–23 (MAAFPHKIIFFLVCSTLTHVAFS) form the signal peptide. The 62-residue stretch at 33-94 (RWPKPRCKMY…IKFEKYGKCD (62 aa)) folds into the Kazal-like domain. 3 disulfide bridges follow: C39–C75, C53–C72, and C61–C93. N55 carries N-linked (GlcNAc...) asparagine glycosylation.

It localises to the secreted. In terms of biological role, may be a serine protease inhibitor. Essential for sperm maturation and fertility. Inhibits sperm acrosome reaction, protecting sperm from premature reaction. The polypeptide is Serine protease inhibitor Kazal-type 13 (SPINK13) (Homo sapiens (Human)).